A 310-amino-acid polypeptide reads, in one-letter code: MGGNQTSITEFLLLGFPIGPRIQMLLFGLFSLFYIFILLGNGTILGLISLDSRLHTPMYFFLSHLAVVDIACACSTVPQMLVNLLHPAKPISFAGCMTQMFLFLSFAHTECLLLVVMSYDRYVAICHPLRYSTIMTWKVCITLALTSWILGVLLALVHLVLLLPLSFCGPQKLNHFFCEIMAVLKLACADTHINEVMVLAGAVSVLVGAFFSTVISYVHILCAILKIQSGEGCQKAFSICSSHLCVVGLFYGTAIIMYVEPQYESPKEQKKYLLLFHSLFNPMLNPLIYSLRNKEVQGTLKRMLEKKRTS.

At 1–24 the chain is on the extracellular side; sequence MGGNQTSITEFLLLGFPIGPRIQM. N4 carries an N-linked (GlcNAc...) asparagine glycan. Residues 25–48 form a helical membrane-spanning segment; the sequence is LLFGLFSLFYIFILLGNGTILGLI. Topologically, residues 49 to 56 are cytoplasmic; it reads SLDSRLHT. A helical transmembrane segment spans residues 57 to 78; that stretch reads PMYFFLSHLAVVDIACACSTVP. At 79 to 99 the chain is on the extracellular side; it reads QMLVNLLHPAKPISFAGCMTQ. An intrachain disulfide couples C96 to C188. The chain crosses the membrane as a helical span at residues 100 to 119; it reads MFLFLSFAHTECLLLVVMSY. The Cytoplasmic portion of the chain corresponds to 120 to 138; that stretch reads DRYVAICHPLRYSTIMTWK. The chain crosses the membrane as a helical span at residues 139-157; the sequence is VCITLALTSWILGVLLALV. At 158 to 195 the chain is on the extracellular side; it reads HLVLLLPLSFCGPQKLNHFFCEIMAVLKLACADTHINE. Residues 196–218 traverse the membrane as a helical segment; that stretch reads VMVLAGAVSVLVGAFFSTVISYV. The Cytoplasmic segment spans residues 219 to 235; it reads HILCAILKIQSGEGCQK. Residues 236-258 traverse the membrane as a helical segment; the sequence is AFSICSSHLCVVGLFYGTAIIMY. Over 259 to 271 the chain is Extracellular; sequence VEPQYESPKEQKK. A helical transmembrane segment spans residues 272–291; sequence YLLLFHSLFNPMLNPLIYSL. The Cytoplasmic segment spans residues 292–310; the sequence is RNKEVQGTLKRMLEKKRTS.

The protein belongs to the G-protein coupled receptor 1 family.

It is found in the cell membrane. In terms of biological role, odorant receptor. This Homo sapiens (Human) protein is Olfactory receptor 2A25 (OR2A25).